Consider the following 212-residue polypeptide: Pyridoxine/pyridoxamine 5'-phosphate oxidase (212 aa).

Residues 8–11 (RRTY) and lysine 66 each bind substrate. FMN is bound by residues 61-66 (RIVLLK), 76-77 (FT), arginine 82, lysine 83, and glutamine 105. Residues tyrosine 123, arginine 127, and serine 131 each contribute to the substrate site. Residues 140-141 (QS) and tryptophan 184 contribute to the FMN site. A substrate-binding site is contributed by 190-192 (RLH). Arginine 194 serves as a coordination point for FMN.

Belongs to the pyridoxamine 5'-phosphate oxidase family. As to quaternary structure, homodimer. FMN is required as a cofactor.

The catalysed reaction is pyridoxamine 5'-phosphate + O2 + H2O = pyridoxal 5'-phosphate + H2O2 + NH4(+). It catalyses the reaction pyridoxine 5'-phosphate + O2 = pyridoxal 5'-phosphate + H2O2. It functions in the pathway cofactor metabolism; pyridoxal 5'-phosphate salvage; pyridoxal 5'-phosphate from pyridoxamine 5'-phosphate: step 1/1. Its pathway is cofactor metabolism; pyridoxal 5'-phosphate salvage; pyridoxal 5'-phosphate from pyridoxine 5'-phosphate: step 1/1. Functionally, catalyzes the oxidation of either pyridoxine 5'-phosphate (PNP) or pyridoxamine 5'-phosphate (PMP) into pyridoxal 5'-phosphate (PLP). The sequence is that of Pyridoxine/pyridoxamine 5'-phosphate oxidase from Cupriavidus taiwanensis (strain DSM 17343 / BCRC 17206 / CCUG 44338 / CIP 107171 / LMG 19424 / R1) (Ralstonia taiwanensis (strain LMG 19424)).